The following is a 698-amino-acid chain: Sulfhydryl oxidase 2 (698 aa).

A signal peptide spans 1-21; that stretch reads MAAAGAAVARSPGIGAGPALR. The region spanning 34-178 is the Thioredoxin domain; that stretch reads PRLLVLLAAA…RQTMIDFLQN (145 aa). Asn-77 carries an N-linked (GlcNAc...) asparagine glycan. Active-site nucleophile residues include Cys-91 and Cys-94. Cystine bridges form between Cys-91–Cys-94 and Cys-122–Cys-131. Residues Asn-178, Asn-218, and Asn-266 are each glycosylated (N-linked (GlcNAc...) asparagine). Cys-418 and Cys-430 are disulfide-bonded. Residues 421–530 enclose the ERV/ALR sulfhydryl oxidase domain; the sequence is SRSELRGYPC…EDPRFPKLQW (110 aa). Residues Arg-426, Trp-433, His-437, Glu-478, His-482, 505–512, Lys-527, and Trp-530 each bind FAD; that span reads WKKHNMVN. A disulfide bridge links Cys-476 with Cys-479. The cysteines at positions 536 and 539 are disulfide-linked. Positions 570–624 are disordered; that stretch reads TYSADQGDSSEGGTLARGEEEEKRLTPPEVSHGDRDTQSVRPPGALGPRPALPES. The segment covering 572-581 has biased composition (polar residues); that stretch reads SADQGDSSEG. Position 579 is a phosphoserine (Ser-579). The segment covering 586–607 has biased composition (basic and acidic residues); sequence RGEEEEKRLTPPEVSHGDRDTQ. Residues 610-622 are compositionally biased toward low complexity; that stretch reads RPPGALGPRPALP. Residues 662 to 682 form a helical membrane-spanning segment; the sequence is SLCVVLYVASSLFLMVMYFFF.

The protein belongs to the quiescin-sulfhydryl oxidase (QSOX) family. The cofactor is FAD. As to expression, expressed in pancreas, brain, placenta, kidney, heart and fetal tissues. Weakly expressed in lung, liver and skeletal muscles.

The protein resides in the membrane. The protein localises to the secreted. It is found in the cell membrane. Its subcellular location is the nucleus membrane. The enzyme catalyses 2 R'C(R)SH + O2 = R'C(R)S-S(R)CR' + H2O2. Catalyzes the oxidation of sulfhydryl groups in peptide and protein thiols to disulfides with the reduction of oxygen to hydrogen peroxide. May contribute to disulfide bond formation in a variety of secreted proteins. Also seems to play a role in regulating the sensitization of neuroblastoma cells for interferon-gamma-induced apoptosis. This chain is Sulfhydryl oxidase 2 (QSOX2), found in Homo sapiens (Human).